Consider the following 596-residue polypeptide: UvrABC system protein C (596 aa).

A GIY-YIG domain is found at 16–95; it reads SSPGVYRFYS…IKENKPKYNV (80 aa). Residues 209–244 enclose the UVR domain; sequence SSVKKYYQEKMLSAAEDMQFEKAQFFKERYNSVLGL.

It belongs to the UvrC family. In terms of assembly, interacts with UvrB in an incision complex.

The protein resides in the cytoplasm. Functionally, the UvrABC repair system catalyzes the recognition and processing of DNA lesions. UvrC both incises the 5' and 3' sides of the lesion. The N-terminal half is responsible for the 3' incision and the C-terminal half is responsible for the 5' incision. This Cytophaga hutchinsonii (strain ATCC 33406 / DSM 1761 / CIP 103989 / NBRC 15051 / NCIMB 9469 / D465) protein is UvrABC system protein C.